The sequence spans 284 residues: GPN-loop GTPase 3 (284 aa).

Gly13–Thr18 is a GTP binding site. The Gly-Pro-Asn (GPN)-loop; involved in dimer interface motif lies at Gly72–Asn74. Residue Thr174–Asp177 participates in GTP binding. Positions Lys261–Glu284 are disordered.

This sequence belongs to the GPN-loop GTPase family. As to quaternary structure, heterodimer with GPN1. Binds to RNA polymerase II (RNAPII). Interacts directly with subunits RPB4 and RPB7 and the CTD of RPB1.

In terms of biological role, small GTPase required for proper localization of RNA polymerase II (RNAPII). May act at an RNAP assembly step prior to nuclear import. In Rattus norvegicus (Rat), this protein is GPN-loop GTPase 3.